The following is a 247-amino-acid chain: tRNA1(Val) (adenine(37)-N6)-methyltransferase (247 aa).

Belongs to the methyltransferase superfamily. tRNA (adenine-N(6)-)-methyltransferase family.

Its subcellular location is the cytoplasm. It catalyses the reaction adenosine(37) in tRNA1(Val) + S-adenosyl-L-methionine = N(6)-methyladenosine(37) in tRNA1(Val) + S-adenosyl-L-homocysteine + H(+). In terms of biological role, specifically methylates the adenine in position 37 of tRNA(1)(Val) (anticodon cmo5UAC). This Edwardsiella ictaluri (strain 93-146) protein is tRNA1(Val) (adenine(37)-N6)-methyltransferase.